We begin with the raw amino-acid sequence, 65 residues long: Large ribosomal subunit protein bL35 (65 aa).

The disordered stretch occupies residues 1-30 (MPKMKTVSGAAKRFKKTGSGRFKSKQSHLR). Over residues 12 to 30 (KRFKKTGSGRFKSKQSHLR) the composition is skewed to basic residues.

Belongs to the bacterial ribosomal protein bL35 family.

This chain is Large ribosomal subunit protein bL35, found in Alteromonas mediterranea (strain DSM 17117 / CIP 110805 / LMG 28347 / Deep ecotype).